The sequence spans 303 residues: Pseudouridine-5'-phosphate glycosidase (303 aa).

The active-site Proton donor is glutamate 23. Positions 85 and 105 each coordinate substrate. A Mn(2+)-binding site is contributed by aspartate 137. A substrate-binding site is contributed by 139-141; sequence SQD. Lysine 158 (nucleophile) is an active-site residue.

The protein belongs to the pseudouridine-5'-phosphate glycosidase family. Homotrimer. The cofactor is Mn(2+).

The enzyme catalyses D-ribose 5-phosphate + uracil = psi-UMP + H2O. Its function is as follows. Catalyzes the reversible cleavage of pseudouridine 5'-phosphate (PsiMP) to ribose 5-phosphate and uracil. Functions biologically in the cleavage direction, as part of a pseudouridine degradation pathway. The chain is Pseudouridine-5'-phosphate glycosidase from Myxococcus xanthus (strain DK1622).